Reading from the N-terminus, the 567-residue chain is R-linalool synthase QH1, chloroplastic (567 aa).

A chloroplast-targeting transit peptide spans 1–24; that stretch reads GNAYMRIYSTKTTRITANATVNAA. Residues arginine 282, aspartate 319, aspartate 323, arginine 460, and aspartate 463 each contribute to the (2E)-geranyl diphosphate site. The Mg(2+) site is built by aspartate 319 and aspartate 323. Positions 319–323 match the DDXXD motif motif; that stretch reads DDVYD. Residues aspartate 463, threonine 467, and glutamate 471 each contribute to the Mg(2+) site.

Belongs to the terpene synthase family. Tpsb subfamily. Mg(2+) is required as a cofactor. Highly expressed in leaves and lower levels in inflorescences. Not detected in stems, stem epidermis, stem stele or roots.

Its subcellular location is the plastid. The protein localises to the chloroplast. It carries out the reaction (2E)-geranyl diphosphate + H2O = (R)-linalool + diphosphate. Its pathway is secondary metabolite biosynthesis; terpenoid biosynthesis. Functionally, monoterpene synthase that catalyzes the formation of (3R)-linalool from geranyl diphosphate, but not from isopentenyl diphosphate, dimethylallyl diphosphate, chrysanthemyl diphosphate, farnesyl diphosphate, (+)-copalyl diphosphate or geranylgeranyl diphosphate. The protein is R-linalool synthase QH1, chloroplastic (QH1) of Artemisia annua (Sweet wormwood).